Reading from the N-terminus, the 341-residue chain is MGTPLRRSRRLEGLNPLSLENLPDPEVSRAKRALVDFKSNPEETRELESPRVPPLDLVSPQPQPETSPESPCPKQDAGFGSPQRQPEPHPGSLQLHQDLGLDSPAGQTESNPESPQREQSSKLSPTQDSEVAHAKEEVIPRSPEPCPGQQAPGPEPSQPAQELAFQAPSSPERQLEPSKLPPAGESVTGSLDLKKRVIASPQAPASKKLKEELPVIPKGKPKSGRVWKDRSKKRFSQMVQDKPLRTSWQRKMKERQERKLAKDFARHLEEEKQRRRQEKKERRAENLRRRLENERKAEIVQVIRNPAKLKKAKKKQLRSIQKRDTLALLQKQPPQRPVAKV.

The segment at 1–341 is disordered; that stretch reads MGTPLRRSRR…QPPQRPVAKV (341 aa). A Phosphoserine modification is found at Ser18. Residues 26–49 show a composition bias toward basic and acidic residues; the sequence is EVSRAKRALVDFKSNPEETRELES. Residue Ser59 is modified to Phosphoserine. Positions 64 to 73 are enriched in low complexity; the sequence is PETSPESPCP. Thr66 carries the phosphothreonine modification. 7 positions are modified to phosphoserine: Ser67, Ser70, Ser81, Ser92, Ser103, Ser114, and Ser124. Positions 105–114 are enriched in polar residues; the sequence is AGQTESNPES. Residues 130–139 show a composition bias toward basic and acidic residues; that stretch reads EVAHAKEEVI. Phosphoserine is present on residues Ser142, Ser169, Ser170, and Ser200. Basic residues predominate over residues 219–235; it reads GKPKSGRVWKDRSKKRF. Positions 254–298 are enriched in basic and acidic residues; it reads ERQERKLAKDFARHLEEEKQRRRQEKKERRAENLRRRLENERKAE. A coiled-coil region spans residues 261-304; the sequence is AKDFARHLEEEKQRRRQEKKERRAENLRRRLENERKAEIVQVIR. Residues 307–317 are compositionally biased toward basic residues; the sequence is AKLKKAKKKQL. Residue Arg323 is modified to Citrulline.

Post-translationally, citrullinated by PADI4.

The protein localises to the nucleus. Its subcellular location is the chromosome. It is found in the nucleolus. In terms of biological role, required for proper chromosome segregation during mitosis and error-free mitotic progression. This is Coiled-coil domain-containing protein 86 from Rattus norvegicus (Rat).